Consider the following 345-residue polypeptide: Methylthioribose-1-phosphate isomerase (345 aa).

Residues 44-46 (RGA), Arg-87, and Gln-194 each bind substrate. Asp-235 serves as the catalytic Proton donor. Substrate is bound at residue 245 to 246 (NK).

This sequence belongs to the eIF-2B alpha/beta/delta subunits family. MtnA subfamily.

The catalysed reaction is 5-(methylsulfanyl)-alpha-D-ribose 1-phosphate = 5-(methylsulfanyl)-D-ribulose 1-phosphate. Its pathway is amino-acid biosynthesis; L-methionine biosynthesis via salvage pathway; L-methionine from S-methyl-5-thio-alpha-D-ribose 1-phosphate: step 1/6. Its function is as follows. Catalyzes the interconversion of methylthioribose-1-phosphate (MTR-1-P) into methylthioribulose-1-phosphate (MTRu-1-P). The polypeptide is Methylthioribose-1-phosphate isomerase (Heliobacterium modesticaldum (strain ATCC 51547 / Ice1)).